A 244-amino-acid chain; its full sequence is NAD-dependent protein deacylase SIR2rp3 (244 aa).

The Deacetylase sirtuin-type domain occupies 1-239 (MRRPNGMIAI…PAWADEVLHG (239 aa)). 13–32 (GAGISAESGISTFRDQNGLW) contributes to the NAD(+) binding site. Residues Tyr57 and Arg60 each contribute to the substrate site. Residue 95 to 98 (QNID) coordinates NAD(+). His113 (proton acceptor) is an active-site residue. Positions 121 and 141 each coordinate Zn(2+). NAD(+) contacts are provided by residues 181–183 (GTS) and Ala225.

The protein belongs to the sirtuin family. Class III subfamily. Zn(2+) is required as a cofactor.

The protein localises to the mitochondrion. The catalysed reaction is N(6)-malonyl-L-lysyl-[protein] + NAD(+) + H2O = 2''-O-malonyl-ADP-D-ribose + nicotinamide + L-lysyl-[protein]. It carries out the reaction N(6)-succinyl-L-lysyl-[protein] + NAD(+) + H2O = 2''-O-succinyl-ADP-D-ribose + nicotinamide + L-lysyl-[protein]. It catalyses the reaction N(6)-glutaryl-L-lysyl-[protein] + NAD(+) + H2O = 2''-O-glutaryl-ADP-D-ribose + nicotinamide + L-lysyl-[protein]. Functionally, NAD-dependent lysine demalonylase, desuccinylase and deglutarylase that specifically removes malonyl, succinyl and glutaryl groups on target proteins. Has weak NAD-dependent protein deacetylase activity; however this activity may not be physiologically relevant in vivo. The sequence is that of NAD-dependent protein deacylase SIR2rp3 (SIR2rp3) from Trypanosoma brucei brucei (strain 927/4 GUTat10.1).